We begin with the raw amino-acid sequence, 199 residues long: Protein PPP1R35 homolog (199 aa).

A compositionally biased stretch (basic residues) spans 1–11; it reads MPHKRRNRVHA. Disordered regions lie at residues 1-23 and 36-60; these read MPHK…RVSV and ESCN…AMTN. Polar residues predominate over residues 38-49; that stretch reads CNGSHADNSSPD.

It belongs to the PPP1R35 family. As to quaternary structure, interacts with Ana3; this complex is recruited to daughter centrioles before their conversion to centrosomes.

The protein resides in the cytoplasm. The protein localises to the cytoskeleton. Its subcellular location is the microtubule organizing center. It is found in the centrosome. It localises to the centriole. In terms of biological role, participates in the later stages of centriole assembly through the interaction with Ana3 leading to the centriole to centrosome conversion in somatic cells. This is Protein PPP1R35 homolog from Drosophila melanogaster (Fruit fly).